We begin with the raw amino-acid sequence, 286 residues long: Bifunctional protein FolD (286 aa).

Residues 165–167 (GRS) and Ser-190 contribute to the NADP(+) site.

Belongs to the tetrahydrofolate dehydrogenase/cyclohydrolase family. Homodimer.

The catalysed reaction is (6R)-5,10-methylene-5,6,7,8-tetrahydrofolate + NADP(+) = (6R)-5,10-methenyltetrahydrofolate + NADPH. The enzyme catalyses (6R)-5,10-methenyltetrahydrofolate + H2O = (6R)-10-formyltetrahydrofolate + H(+). It functions in the pathway one-carbon metabolism; tetrahydrofolate interconversion. Catalyzes the oxidation of 5,10-methylenetetrahydrofolate to 5,10-methenyltetrahydrofolate and then the hydrolysis of 5,10-methenyltetrahydrofolate to 10-formyltetrahydrofolate. The chain is Bifunctional protein FolD from Burkholderia cenocepacia (strain ATCC BAA-245 / DSM 16553 / LMG 16656 / NCTC 13227 / J2315 / CF5610) (Burkholderia cepacia (strain J2315)).